Consider the following 964-residue polypeptide: MTETASGPARGSRAKGTKAKGLRIERIHTTPGVHPYDEVEWARRDVVMTNWRDGSVNFEQRGVEFPDFWSVNAVNIVTSKYFRGAVGTPQREVSLRQLIDRIVKTYRKAGEDYKYFASPADAEIFEHELAYALLHQIFSFNSPVWFNVGTPQPQQVSACFILAVDDSMESILDWYKEEGMIFKGGSGAGLNLSRIRSSKELLSSGGNASGPVSFMRGADASAGTIKSGGATRRAAKMVILDVDHPDIEDFIETKVKEEEKIRALRDAGFDMDLGGDDITSVQYQNANNSVRVNDTFMKAVEEGGKFGLTSRMTGEVIEEVDAKSLFRKMAEAAWACADPGIQYDDTINHWHTCPESGRINGSNPCSEYMHLDNTSCNLASLNLMKFLKDDGKGRQSFEVERFAKVVELVITAMDISICFADFPTQKIGENTRAFRQLGIGYANLGALLMATGHAYDSDGGRALAGAITSLMTGTSYKRSAELAAVVGPYDGYARNAQPHQRVMKQHSDANGVAVRVDDLDTPIWAAATEAWQDVLHLGEKNGFRNAQASVIAPTGTIGLAMSCDTTGLEPDLALVKFKKLVGGGSMQIVNGTVPQALRRLGYQEEQIEAIVAHIAENGNVIDAPGLKHEHYEVFDCAMGERSISAMGHVRMMAAIQPWISGALSKTVNLPETATVEDVEEVYFEAWKMGVKALAIYRDNCKVGQPLSAKKKETEKAEVTAKTEATIREAVEKVVEYRPVRKRLPKGRPGITTSFTVGGAEGYMTANSYPDDGLGEVFLKMSKQGSTLAGMMDAFSIAVSVGLQYGVPLETYVSKFTNMRFEPAGMTDDPDVRMAQSIVDYIFRRLALDFLPFETRSALGIHSAEERQRHLETGSYEPSDDVDMDVEGLAQSAPRAQELKAVATPKAEVAAAVPAPKQAHTSAELVEMQLGIQADAPLCFSCGTKMQRAGSCYICEGCGSTSGCS.

The disordered stretch occupies residues 1 to 21; it reads MTETASGPARGSRAKGTKAKG. Residues 12–21 show a composition bias toward basic residues; it reads SRAKGTKAKG. Residues Ser-142, 158–159, Gly-187, 363–367, and 553–557 contribute to the substrate site; these read AC, NPCSE, and PTGTI. Cys-159 and Cys-376 are joined by a disulfide. Residue Asn-363 is the Proton acceptor of the active site. The active-site Cysteine radical intermediate is Cys-365. The Proton acceptor role is filled by Glu-367.

This sequence belongs to the ribonucleoside diphosphate reductase class-2 family. Adenosylcob(III)alamin is required as a cofactor.

It carries out the reaction a 2'-deoxyribonucleoside 5'-diphosphate + [thioredoxin]-disulfide + H2O = a ribonucleoside 5'-diphosphate + [thioredoxin]-dithiol. In terms of biological role, catalyzes the reduction of ribonucleotides to deoxyribonucleotides. May function to provide a pool of deoxyribonucleotide precursors for DNA repair during oxygen limitation and/or for immediate growth after restoration of oxygen. The sequence is that of Vitamin B12-dependent ribonucleotide reductase (nrdJ) from Streptomyces avermitilis (strain ATCC 31267 / DSM 46492 / JCM 5070 / NBRC 14893 / NCIMB 12804 / NRRL 8165 / MA-4680).